We begin with the raw amino-acid sequence, 271 residues long: Tumor necrosis factor receptor superfamily member 4 (271 aa).

The N-terminal stretch at 1–19 (MYVWVQQPTAFLLLGLSLG) is a signal peptide. The Extracellular portion of the chain corresponds to 20-210 (VTVKLNCVKD…TPTLVAPEGP (191 aa)). 2 TNFR-Cys repeats span residues 25-60 (NCVKDTYPSGHKCCRECQPGHGMVSRCDHTRDTVCH) and 61-102 (PCEP…DTVC). Intrachain disulfides connect cysteine 26–cysteine 37, cysteine 38–cysteine 51, cysteine 41–cysteine 59, cysteine 62–cysteine 76, cysteine 79–cysteine 94, cysteine 82–cysteine 102, cysteine 104–cysteine 122, and cysteine 125–cysteine 138. One copy of the TNFR-Cys 3; truncated repeat lies at 103 to 123 (QCRPGTQPRQDSSHKLGVDCV). The TNFR-Cys 4 repeat unit spans residues 124–164 (PCPPGHFSPGSNQACKPWTNCTLSGKQIRHPASNSLDTVCE). Asparagine 143 is a glycosylation site (N-linked (GlcNAc...) asparagine). An intrachain disulfide couples cysteine 144 to cysteine 163. The helical transmembrane segment at 211–235 (AFAVILGLGLGLLAPLTVLLALYLL) threads the bilayer. Residues 236 to 271 (RKAWRSPNTPKPCWGNSFRTPIQEEQTDTHFTLAKI) lie on the Cytoplasmic side of the membrane.

Interacts with TRAF2, TRAF3 and TRAF5. Activated T-cells.

It is found in the membrane. Its function is as follows. Receptor for TNFSF4/OX40L/GP34. Is a costimulatory molecule implicated in long-term T-cell immunity. The chain is Tumor necrosis factor receptor superfamily member 4 (Tnfrsf4) from Rattus norvegicus (Rat).